Here is a 251-residue protein sequence, read N- to C-terminus: Aspartate/glutamate leucyltransferase (251 aa).

This sequence belongs to the R-transferase family. Bpt subfamily.

It is found in the cytoplasm. It catalyses the reaction N-terminal L-glutamyl-[protein] + L-leucyl-tRNA(Leu) = N-terminal L-leucyl-L-glutamyl-[protein] + tRNA(Leu) + H(+). The catalysed reaction is N-terminal L-aspartyl-[protein] + L-leucyl-tRNA(Leu) = N-terminal L-leucyl-L-aspartyl-[protein] + tRNA(Leu) + H(+). Its function is as follows. Functions in the N-end rule pathway of protein degradation where it conjugates Leu from its aminoacyl-tRNA to the N-termini of proteins containing an N-terminal aspartate or glutamate. In Xanthomonas axonopodis pv. citri (strain 306), this protein is Aspartate/glutamate leucyltransferase.